The primary structure comprises 466 residues: MAKGASISGFPEWLPSERVVEQRVIDTLRKVFELNGFIGIETRAVETGASLLKKGETSKEIYLLSRLQEVGHESDTPIEERLGLHFDLTVPLSRYVVEHSGALAFPFKRWQIQKVWRGERPQEGRFREFVQADIDVIGAGDLPDHYEVELPLVMVSALEELRAYGLPKATVHANNRKLSEGFYRGLGLTDVEGVLREIDKLDKIGADEVARLLTETCGATEAQARACLELAELTASDGAELAAKFDALCEAHGIVKDSEAYTLARQGLDTLAMIVDEAAAIRPGSVIADLKIARGLDYYTGSVYETFLDGAASLGSICSGGRYDNLASQGNRKYPGVGLSIGLSRLVSYMLHTAGAHANRVSPAAVLVAVWNEEDRPAANRIANQLRARGIATDVAPTAAKLGKQIKYADKLGIPYVWFPATAAEGAEGAEPAGDEVKNIVTGEQVAADCTSWEPDTVVAQQTVEI.

This sequence belongs to the class-II aminoacyl-tRNA synthetase family. As to quaternary structure, homodimer.

The protein resides in the cytoplasm. The catalysed reaction is tRNA(His) + L-histidine + ATP = L-histidyl-tRNA(His) + AMP + diphosphate + H(+). This Bifidobacterium longum (strain NCC 2705) protein is Histidine--tRNA ligase (hisS).